Here is a 786-residue protein sequence, read N- to C-terminus: Cadherin-9 (786 aa).

The first 21 residues, 1–21 (MRTYSCLQLVIWTCIFHMVDN), serve as a signal peptide directing secretion. An N-linked (GlcNAc...) asparagine glycan is attached at Asn21. A propeptide spanning residues 22–52 (STLQGKDSSHFLRRIVNLKKDEGKMLHRAKR) is cleaved from the precursor. Over 22–614 (STLQGKDSSH…MLAAGLSTGA (593 aa)) the chain is Extracellular. 5 Cadherin domains span residues 54 to 158 (WMWN…EPKF), 159 to 267 (TKDL…PPRF), 268 to 382 (PQST…PPVF), 383 to 487 (SKLS…APEF), and 487 to 604 (FATY…AEAL). Asn254 is a glycosylation site (N-linked (GlcNAc...) asparagine). N-linked (GlcNAc...) asparagine glycans are attached at residues Asn454 and Asn535. The helical transmembrane segment at 615–635 (LIAILLCVVILLTLIVLFAAL) threads the bilayer. The Cytoplasmic segment spans residues 636–786 (KRQRKKEPLI…AEMYGGNDSD (151 aa)). Ser785 carries the phosphoserine modification.

Its subcellular location is the cell membrane. Cadherins are calcium-dependent cell adhesion proteins. They preferentially interact with themselves in a homophilic manner in connecting cells; cadherins may thus contribute to the sorting of heterogeneous cell types. The protein is Cadherin-9 (Cdh9) of Mus musculus (Mouse).